A 302-amino-acid polypeptide reads, in one-letter code: Putative S-adenosyl-L-methionine-dependent methyltransferase MUL_2961 (302 aa).

S-adenosyl-L-methionine-binding positions include Asp128 and 157–158 (DL).

It belongs to the UPF0677 family.

In terms of biological role, exhibits S-adenosyl-L-methionine-dependent methyltransferase activity. This is Putative S-adenosyl-L-methionine-dependent methyltransferase MUL_2961 from Mycobacterium ulcerans (strain Agy99).